The primary structure comprises 105 residues: Flagellar transcriptional regulator FlhD (105 aa).

Belongs to the FlhD family. Homodimer; disulfide-linked. Forms a heterohexamer composed of two FlhC and four FlhD subunits. Each FlhC binds a FlhD dimer, forming a heterotrimer, and a hexamer assembles by dimerization of two heterotrimers.

It is found in the cytoplasm. Its function is as follows. Functions in complex with FlhC as a master transcriptional regulator that regulates transcription of several flagellar and non-flagellar operons by binding to their promoter region. Activates expression of class 2 flagellar genes, including fliA, which is a flagellum-specific sigma factor that turns on the class 3 genes. Also regulates genes whose products function in a variety of physiological pathways. The chain is Flagellar transcriptional regulator FlhD from Ralstonia nicotianae (strain ATCC BAA-1114 / GMI1000) (Ralstonia solanacearum).